The sequence spans 440 residues: Beta-1,3-galactosyl-O-glycosyl-glycoprotein beta-1,6-N-acetylglucosaminyltransferase (440 aa).

The Cytoplasmic segment spans residues 1-9; sequence MKMAGWKKK. Residues 10-30 form a helical; Signal-anchor for type II membrane protein membrane-spanning segment; sequence LCPGHHLWALGCYMLLAVVSL. The Lumenal portion of the chain corresponds to 31–440; sequence RLSLRFKCDV…RHKAIYGTEL (410 aa). N72 and N108 each carry an N-linked (GlcNAc...) asparagine; by host glycan. Intrachain disulfides connect C73/C230, C164/C384, C185/C212, and C393/C425.

Belongs to the glycosyltransferase 14 family.

Its subcellular location is the host Golgi apparatus membrane. It catalyses the reaction a 3-O-[beta-D-galactosyl-(1-&gt;3)-N-acetyl-alpha-D-galactosaminyl]-L-seryl-[protein] + UDP-N-acetyl-alpha-D-glucosamine = 3-O-{beta-D-galactosyl-(1-&gt;3)-[N-acetyl-beta-D-glucosaminyl-(1-&gt;6)]-N-acetyl-alpha-D-galactosaminyl}-L-seryl-[protein] + UDP + H(+). It carries out the reaction a 3-O-[beta-D-galactosyl-(1-&gt;3)-N-acetyl-alpha-D-galactosaminyl]-L-threonyl-[protein] + UDP-N-acetyl-alpha-D-glucosamine = a 3-O-{beta-D-galactosyl-(1-&gt;3)-[N-acetyl-beta-D-glucosaminyl-(1-&gt;6)]-N-acetyl-alpha-D-galactosaminyl}-L-threonyl-[protein] + UDP + H(+). The catalysed reaction is a beta-D-Gal-(1-&gt;4)-beta-D-GlcNAc-(1-&gt;3)-beta-D-Gal-(1-&gt;4)-beta-D-GlcNAc derivative + UDP-N-acetyl-alpha-D-glucosamine = a beta-D-Gal-(1-&gt;4)-beta-D-GlcNAc-(1-&gt;3)-[beta-D-GlcNAc-(1-&gt;6)]-beta-D-Gal-(1-&gt;4)-N-acetyl-beta-D-glucosaminyl derivative + UDP + H(+). The enzyme catalyses 3-O-[N-acetyl-beta-D-glucosaminyl-(1-&gt;3)-N-acetyl-alpha-D-galactosaminyl]-L-seryl-[protein] + UDP-N-acetyl-alpha-D-glucosamine = 3-O-[N-acetyl-beta-D-glucosaminyl-(1-&gt;3)-[N-acetyl-beta-D-glucosaminyl-(1-&gt;6)]-N-acetyl-alpha-D-galactosaminyl]-L-seryl-[protein] + UDP + H(+). It catalyses the reaction a 3-O-[N-acetyl-beta-D-glucosaminyl-(1-&gt;3)-N-acetyl-alpha-D-galactosaminyl]-L-threonyl-[protein] + UDP-N-acetyl-alpha-D-glucosamine = 3-O-[N-acetyl-beta-D-glucosaminyl-(1-&gt;3)-[N-acetyl-beta-D-glucosaminyl-(1-&gt;6)]-N-acetyl-alpha-D-galactosaminyl]-L-threonyl-[protein] + UDP + H(+). It functions in the pathway protein modification; protein glycosylation. Non-essential glycosyltransferase that can synthesize all known mucin beta 6 N-acetylglucosaminides. Mediates core 2 and core 4 O-glycan branching, 2 important steps in mucin-type biosynthesis. Has also I-branching enzyme activity by converting linear into branched poly-N-acetyllactosaminoglycans. Contributes to the post-translational modifications of structural proteins. The protein is Beta-1,3-galactosyl-O-glycosyl-glycoprotein beta-1,6-N-acetylglucosaminyltransferase (Bo17) of Bovine herpesvirus 4 (strain LVR140) (BoHV-4).